Consider the following 427-residue polypeptide: Large ribosomal subunit protein uL4 (427 aa).

Residue Ala-2 is modified to N-acetylalanine. Lys-14 is subject to N6-acetyllysine. Position 97 is an omega-N-methylarginine (Arg-97). Lys-106 bears the N6-acetyllysine mark. Lys-239 is covalently cross-linked (Glycyl lysine isopeptide (Lys-Gly) (interchain with G-Cter in SUMO2)). N6-acetyllysine is present on Lys-259. Phosphothreonine is present on Thr-266. Phosphoserine occurs at positions 290 and 295. Arg-300 carries the post-translational modification Citrulline. Residue Lys-327 forms a Glycyl lysine isopeptide (Lys-Gly) (interchain with G-Cter in SUMO2) linkage. An N6-acetyllysine mark is found at Lys-333 and Lys-353. Position 364 is an N6-acetyllysine; alternate (Lys-364). A Glycyl lysine isopeptide (Lys-Gly) (interchain with G-Cter in SUMO1); alternate cross-link involves residue Lys-364. Ser-365 bears the Phosphoserine mark. The segment at Ala-369 to Ala-427 is disordered. Positions Val-377–Val-397 are enriched in basic residues. The segment covering Pro-407 to Ala-427 has biased composition (basic and acidic residues).

It belongs to the universal ribosomal protein uL4 family. Component of the large ribosomal subunit. May bind IPO9 with low affinity. Interacts with RBM3. In terms of processing, citrullinated by PADI4.

The protein resides in the cytoplasm. Component of the large ribosomal subunit. The ribosome is a large ribonucleoprotein complex responsible for the synthesis of proteins in the cell. The polypeptide is Large ribosomal subunit protein uL4 (RPL4) (Pongo abelii (Sumatran orangutan)).